A 239-amino-acid chain; its full sequence is Pimeloyl-[acyl-carrier protein] methyl ester esterase (239 aa).

Residues Trp-20, 77–78, and 138–142 contribute to the substrate site; these read SM and FISLQ. Ser-77 acts as the Nucleophile in catalysis. Active-site residues include Asp-192 and His-220. His-220 is a binding site for substrate.

Belongs to the AB hydrolase superfamily. Carboxylesterase BioH family. Monomer.

It is found in the cytoplasm. It catalyses the reaction 6-carboxyhexanoyl-[ACP] methyl ester + H2O = 6-carboxyhexanoyl-[ACP] + methanol + H(+). It participates in cofactor biosynthesis; biotin biosynthesis. The physiological role of BioH is to remove the methyl group introduced by BioC when the pimeloyl moiety is complete. It allows to synthesize pimeloyl-ACP via the fatty acid synthetic pathway through the hydrolysis of the ester bonds of pimeloyl-ACP esters. The chain is Pimeloyl-[acyl-carrier protein] methyl ester esterase from Legionella pneumophila (strain Corby).